The following is a 323-amino-acid chain: Pyruvate dehydrogenase E1 component subunit beta (323 aa).

Glu-60 lines the thiamine diphosphate pocket. Positions 113, 161, 162, 164, and 166 each coordinate K(+).

In terms of assembly, heterodimer of an alpha and a beta chain. Thiamine diphosphate is required as a cofactor.

The protein resides in the plastid. The protein localises to the chloroplast. The enzyme catalyses N(6)-[(R)-lipoyl]-L-lysyl-[protein] + pyruvate + H(+) = N(6)-[(R)-S(8)-acetyldihydrolipoyl]-L-lysyl-[protein] + CO2. Functionally, the pyruvate dehydrogenase complex catalyzes the overall conversion of pyruvate to acetyl-CoA and CO(2). It contains multiple copies of three enzymatic components: pyruvate dehydrogenase (E1), dihydrolipoamide acetyltransferase (E2) and lipoamide dehydrogenase (E3). This is Pyruvate dehydrogenase E1 component subunit beta (pdhB) from Gracilaria tenuistipitata var. liui (Red alga).